A 398-amino-acid chain; its full sequence is Stabilizer of axonemal microtubules 2 (398 aa).

6 mn regions span residues 114–126, 148–162, 248–260, 282–296, 316–328, and 350–364; these read STTF…PQEI, ITSH…QLEL, NSTS…PYQA, KSIM…ESCR, LSTF…PHEL, and VTMY…RQEI.

The protein belongs to the FAM154 family.

This is Stabilizer of axonemal microtubules 2 (SAXO2) from Homo sapiens (Human).